The following is a 289-amino-acid chain: ATP synthase gamma chain (289 aa).

It belongs to the ATPase gamma chain family. F-type ATPases have 2 components, CF(1) - the catalytic core - and CF(0) - the membrane proton channel. CF(1) has five subunits: alpha(3), beta(3), gamma(1), delta(1), epsilon(1). CF(0) has three main subunits: a, b and c.

Its subcellular location is the cell inner membrane. Functionally, produces ATP from ADP in the presence of a proton gradient across the membrane. The gamma chain is believed to be important in regulating ATPase activity and the flow of protons through the CF(0) complex. This is ATP synthase gamma chain from Halorhodospira halophila (strain DSM 244 / SL1) (Ectothiorhodospira halophila (strain DSM 244 / SL1)).